Consider the following 178-residue polypeptide: Ribosome maturation factor RimP (178 aa).

Belongs to the RimP family.

Its subcellular location is the cytoplasm. Its function is as follows. Required for maturation of 30S ribosomal subunits. This is Ribosome maturation factor RimP from Maricaulis maris (strain MCS10) (Caulobacter maris).